Here is a 230-residue protein sequence, read N- to C-terminus: MVKLVFARHGESEWNKANLFTGWADVDLSEKGTQQAIDAGKLIKEAGIEFDQAYTSVLKRAIKTTNLALEASDQLWVPVEKSWRLNERHYGGLTGKNKAEAAEQFGDEQVHIWRRSYDVLPPNMDRDDEHSAHTDRRYASLDDSVIPDAENLKVTLERALPFWEDKIAPALKDGKNVFVGAHGNSIRALVKHIKGLSDDEIMDVEIPNFPPLVFEFDEKLNVVSEYYLGK.

Substrate-binding positions include 8–15 (RHGESEWN), 21–22 (TG), Arg60, 87–90 (ERHY), Lys98, 114–115 (RR), and 183–184 (GN). His9 serves as the catalytic Tele-phosphohistidine intermediate. Catalysis depends on Glu87, which acts as the Proton donor/acceptor.

The protein belongs to the phosphoglycerate mutase family. BPG-dependent PGAM subfamily.

The enzyme catalyses (2R)-2-phosphoglycerate = (2R)-3-phosphoglycerate. It functions in the pathway carbohydrate degradation; glycolysis; pyruvate from D-glyceraldehyde 3-phosphate: step 3/5. In terms of biological role, catalyzes the interconversion of 2-phosphoglycerate and 3-phosphoglycerate. The polypeptide is 2,3-bisphosphoglycerate-dependent phosphoglycerate mutase (Streptococcus pneumoniae (strain ATCC BAA-255 / R6)).